The primary structure comprises 115 residues: UPF0342 protein Bsph_0375 (115 aa).

The protein belongs to the UPF0342 family.

The sequence is that of UPF0342 protein Bsph_0375 from Lysinibacillus sphaericus (strain C3-41).